The primary structure comprises 296 residues: NAD kinase (296 aa).

The Proton acceptor role is filled by D73. Residues 73-74, K78, 151-152, R178, D180, and 191-196 each bind NAD(+); these read DG, NE, and TAHAMS.

It belongs to the NAD kinase family. The cofactor is a divalent metal cation.

The protein resides in the cytoplasm. The enzyme catalyses NAD(+) + ATP = ADP + NADP(+) + H(+). Involved in the regulation of the intracellular balance of NAD and NADP, and is a key enzyme in the biosynthesis of NADP. Catalyzes specifically the phosphorylation on 2'-hydroxyl of the adenosine moiety of NAD to yield NADP. This chain is NAD kinase, found in Francisella tularensis subsp. mediasiatica (strain FSC147).